The chain runs to 132 residues: Small ribosomal subunit protein uS8 (132 aa).

It belongs to the universal ribosomal protein uS8 family. Part of the 30S ribosomal subunit. Contacts proteins S5 and S12.

Its function is as follows. One of the primary rRNA binding proteins, it binds directly to 16S rRNA central domain where it helps coordinate assembly of the platform of the 30S subunit. This is Small ribosomal subunit protein uS8 from Corynebacterium diphtheriae (strain ATCC 700971 / NCTC 13129 / Biotype gravis).